The following is a 165-amino-acid chain: Dihydrofolate reductase type A13 (165 aa).

A DHFR domain is found at 7–162 (RIYLVAAMGA…ITYTHSVYAR (156 aa)).

It belongs to the dihydrofolate reductase family. In terms of assembly, homodimer.

The enzyme catalyses (6S)-5,6,7,8-tetrahydrofolate + NADP(+) = 7,8-dihydrofolate + NADPH + H(+). The protein operates within cofactor biosynthesis; tetrahydrofolate biosynthesis; 5,6,7,8-tetrahydrofolate from 7,8-dihydrofolate: step 1/1. Functionally, key enzyme in folate metabolism. Catalyzes an essential reaction for de novo glycine and purine synthesis, and for DNA precursor synthesis. The protein is Dihydrofolate reductase type A13 (dfrA13) of Escherichia coli.